Here is a 115-residue protein sequence, read N- to C-terminus: UPF0738 protein SSP1780 (115 aa).

This sequence belongs to the UPF0738 family.

This is UPF0738 protein SSP1780 from Staphylococcus saprophyticus subsp. saprophyticus (strain ATCC 15305 / DSM 20229 / NCIMB 8711 / NCTC 7292 / S-41).